The sequence spans 380 residues: Cytochrome b (380 aa).

4 helical membrane-spanning segments follow: residues 34–54 (FGSL…LLAM), 78–99 (WLIR…YFHI), 114–134 (WNTG…GYVL), and 179–199 (FFAL…IHLT). Positions 84 and 98 each coordinate heme b. 2 residues coordinate heme b: H183 and H197. An a ubiquinone-binding site is contributed by H202. Helical transmembrane passes span 227–247 (TKDI…ALFS), 289–309 (LGGV…PLLH), 321–341 (LSQL…WIGS), and 348–368 (FIII…ILFP).

Belongs to the cytochrome b family. As to quaternary structure, the cytochrome bc1 complex contains 11 subunits: 3 respiratory subunits (MT-CYB, CYC1 and UQCRFS1), 2 core proteins (UQCRC1 and UQCRC2) and 6 low-molecular weight proteins (UQCRH/QCR6, UQCRB/QCR7, UQCRQ/QCR8, UQCR10/QCR9, UQCR11/QCR10 and a cleavage product of UQCRFS1). This cytochrome bc1 complex then forms a dimer. Heme b is required as a cofactor.

It is found in the mitochondrion inner membrane. Component of the ubiquinol-cytochrome c reductase complex (complex III or cytochrome b-c1 complex) that is part of the mitochondrial respiratory chain. The b-c1 complex mediates electron transfer from ubiquinol to cytochrome c. Contributes to the generation of a proton gradient across the mitochondrial membrane that is then used for ATP synthesis. This is Cytochrome b (MT-CYB) from Pygoscelis papua (Gentoo penguin).